We begin with the raw amino-acid sequence, 216 residues long: Thiamine-phosphate synthase (216 aa).

4-amino-2-methyl-5-(diphosphooxymethyl)pyrimidine contacts are provided by residues 35 to 39 (QLRDK) and asparagine 67. 2 residues coordinate Mg(2+): aspartate 68 and aspartate 87. Serine 106 is a binding site for 4-amino-2-methyl-5-(diphosphooxymethyl)pyrimidine. 132 to 134 (TSS) contacts 2-[(2R,5Z)-2-carboxy-4-methylthiazol-5(2H)-ylidene]ethyl phosphate. A 4-amino-2-methyl-5-(diphosphooxymethyl)pyrimidine-binding site is contributed by lysine 135. 2-[(2R,5Z)-2-carboxy-4-methylthiazol-5(2H)-ylidene]ethyl phosphate-binding positions include glycine 163 and 183–184 (IS).

This sequence belongs to the thiamine-phosphate synthase family. Mg(2+) is required as a cofactor.

The enzyme catalyses 2-[(2R,5Z)-2-carboxy-4-methylthiazol-5(2H)-ylidene]ethyl phosphate + 4-amino-2-methyl-5-(diphosphooxymethyl)pyrimidine + 2 H(+) = thiamine phosphate + CO2 + diphosphate. It carries out the reaction 2-(2-carboxy-4-methylthiazol-5-yl)ethyl phosphate + 4-amino-2-methyl-5-(diphosphooxymethyl)pyrimidine + 2 H(+) = thiamine phosphate + CO2 + diphosphate. It catalyses the reaction 4-methyl-5-(2-phosphooxyethyl)-thiazole + 4-amino-2-methyl-5-(diphosphooxymethyl)pyrimidine + H(+) = thiamine phosphate + diphosphate. Its pathway is cofactor biosynthesis; thiamine diphosphate biosynthesis; thiamine phosphate from 4-amino-2-methyl-5-diphosphomethylpyrimidine and 4-methyl-5-(2-phosphoethyl)-thiazole: step 1/1. Functionally, condenses 4-methyl-5-(beta-hydroxyethyl)thiazole monophosphate (THZ-P) and 2-methyl-4-amino-5-hydroxymethyl pyrimidine pyrophosphate (HMP-PP) to form thiamine monophosphate (TMP). The protein is Thiamine-phosphate synthase of Methanoregula boonei (strain DSM 21154 / JCM 14090 / 6A8).